We begin with the raw amino-acid sequence, 235 residues long: Transcription factor MYB59 (235 aa).

HTH myb-type domains lie at 5-57 (QEEY…VNYL) and 58-112 (HPGL…RKKA). A DNA-binding region (H-T-H motif) is located at residues 33–57 (WDFVAKVSGLNRTGKSCRLRWVNYL). The Bipartite nuclear localization signal 1 signature appears at 62-65 (KRGK). Residues 85-108 (WSKIARKLPGRTDNEIKNYWRTHM) constitute a DNA-binding region (H-T-H motif). Residues 109 to 117 (RKKAQEKKR) carry the Bipartite nuclear localization signal 2 motif. Positions 109–147 (RKKAQEKKRPMSPTSSSSNCCSSSMTTTTSQDTGGSNGK) are disordered. Positions 119-138 (MSPTSSSSNCCSSSMTTTTS) are enriched in low complexity.

In terms of tissue distribution, mainly expressed in leaves and seedlings, and to a lower extent, in roots, stems and inflorescences. Isoform MYB59-1 and isoform MYB59-2 are present in roots, leaves, and seedlings, while the expression of isoform MYB59-3 and isoform MYB59-4 is confined to seedlings.

It is found in the nucleus. Its function is as follows. Transcription factor. The protein is Transcription factor MYB59 (MYB59) of Arabidopsis thaliana (Mouse-ear cress).